Here is a 730-residue protein sequence, read N- to C-terminus: Ribosomal RNA large subunit methyltransferase K/L (730 aa).

The 112-residue stretch at 46-157 (TAYRLCVWSR…RGEAILSLDL (112 aa)) folds into the THUMP domain. The disordered stretch occupies residues 394-418 (GERREAQPEGTEARQQVPQASEPAR).

The protein belongs to the methyltransferase superfamily. RlmKL family.

The protein localises to the cytoplasm. It carries out the reaction guanosine(2445) in 23S rRNA + S-adenosyl-L-methionine = N(2)-methylguanosine(2445) in 23S rRNA + S-adenosyl-L-homocysteine + H(+). The enzyme catalyses guanosine(2069) in 23S rRNA + S-adenosyl-L-methionine = N(2)-methylguanosine(2069) in 23S rRNA + S-adenosyl-L-homocysteine + H(+). Its function is as follows. Specifically methylates the guanine in position 2445 (m2G2445) and the guanine in position 2069 (m7G2069) of 23S rRNA. This is Ribosomal RNA large subunit methyltransferase K/L from Pseudomonas putida (strain ATCC 700007 / DSM 6899 / JCM 31910 / BCRC 17059 / LMG 24140 / F1).